Reading from the N-terminus, the 570-residue chain is Methionine--tRNA ligase (570 aa).

Residues 11–21 (PYVQTVPHLGN) carry the 'HIGH' region motif. Zn(2+)-binding residues include Cys-143, Cys-146, Cys-156, and Cys-159. Residues 333–337 (KFSKS) carry the 'KMSKS' region motif. Lys-336 serves as a coordination point for ATP.

This sequence belongs to the class-I aminoacyl-tRNA synthetase family. MetG type 1 subfamily. Zn(2+) serves as cofactor.

The protein resides in the cytoplasm. It catalyses the reaction tRNA(Met) + L-methionine + ATP = L-methionyl-tRNA(Met) + AMP + diphosphate. Its function is as follows. Is required not only for elongation of protein synthesis but also for the initiation of all mRNA translation through initiator tRNA(fMet) aminoacylation. In Pyrobaculum arsenaticum (strain DSM 13514 / JCM 11321 / PZ6), this protein is Methionine--tRNA ligase.